A 139-amino-acid polypeptide reads, in one-letter code: Ribonuclease P/MRP protein subunit POP5 (139 aa).

The protein belongs to the eukaryotic/archaeal RNase P protein component 2 family.

The protein localises to the nucleus. It carries out the reaction Endonucleolytic cleavage of RNA, removing 5'-extranucleotides from tRNA precursor.. Its function is as follows. Component of ribonuclease P, a protein complex that generates mature tRNA molecules by cleaving their 5'-ends. Also a component of RNase MRP, which cleaves pre-rRNA sequences. The protein is Ribonuclease P/MRP protein subunit POP5 of Schizosaccharomyces pombe (strain 972 / ATCC 24843) (Fission yeast).